A 476-amino-acid chain; its full sequence is Probable G-protein coupled receptor No9 (476 aa).

The Extracellular segment spans residues 1–36 (MEGPPLSPAPADNVTLNVSCGRPATLFDWADHRLIS). Residues Asn-13 and Asn-17 are each glycosylated (N-linked (GlcNAc...) asparagine). The chain crosses the membrane as a helical span at residues 37–60 (LLALAFLNLMVVAGNLLVVMAVFV). The Cytoplasmic segment spans residues 61-69 (HSKLRTVTN). Residues 70–93 (LFIVSLACADLLVGMLVLPFSATL) traverse the membrane as a helical segment. The Extracellular portion of the chain corresponds to 94–103 (EVLDVWLYGD). The helical transmembrane segment at 104–127 (VWCSVWLAVDVWMCTSSILNLCAI) threads the bilayer. A disulfide bond links Cys-106 and Cys-192. Over 128-152 (SLDRYLAVSQPISYPSLMSTRRAKQ) the chain is Cytoplasmic. A helical transmembrane segment spans residues 153-172 (LIAAVWVLSFVICFPPLVGW). The Extracellular segment spans residues 173 to 200 (NDRPGTLIGSRGSSACRLTCELTNERGY). A helical membrane pass occupies residues 201-221 (VIYSALGSFFLPSTVMLFFYG). Over 222 to 375 (RIYRTAVSTT…FRMETKAAKT (154 aa)) the chain is Cytoplasmic. The span at 266-278 (AAAGGARAHGQVR) shows a compositional bias: low complexity. Disordered stretches follow at residues 266 to 293 (AAAG…NKPS) and 317 to 351 (DSRP…PRFI). The helical transmembrane segment at 376-396 (VGIIVGLFILCWLPFFVCYLV) threads the bilayer. The Extracellular portion of the chain corresponds to 397 to 406 (RGFCADCVPP). Residues 407–430 (LLFSVFFWLGYCNSAVNPCVYALC) form a helical membrane-spanning segment. Residues 431-476 (SRDFRFAFSSILCKCVCRRGAMERRFRRTLLVGNRSQTEEDCEVAD) are Cytoplasmic-facing.

Belongs to the G-protein coupled receptor 1 family.

It localises to the cell membrane. In terms of biological role, orphan G-protein coupled receptor. The protein is Probable G-protein coupled receptor No9 of Amphibalanus amphitrite (Striped barnacle).